We begin with the raw amino-acid sequence, 180 residues long: NADH-quinone oxidoreductase subunit I (180 aa).

4Fe-4S ferredoxin-type domains lie at 50 to 80 (LTRD…LQKA) and 90 to 119 (EFFR…LTPD). Cys-60, Cys-63, Cys-66, Cys-70, Cys-99, Cys-102, Cys-105, and Cys-109 together coordinate [4Fe-4S] cluster.

This sequence belongs to the complex I 23 kDa subunit family. In terms of assembly, NDH-1 is composed of 13 different subunits. Subunits NuoA, H, J, K, L, M, N constitute the membrane sector of the complex. Requires [4Fe-4S] cluster as cofactor.

It is found in the cell inner membrane. The enzyme catalyses a quinone + NADH + 5 H(+)(in) = a quinol + NAD(+) + 4 H(+)(out). NDH-1 shuttles electrons from NADH, via FMN and iron-sulfur (Fe-S) centers, to quinones in the respiratory chain. The immediate electron acceptor for the enzyme in this species is believed to be ubiquinone. Couples the redox reaction to proton translocation (for every two electrons transferred, four hydrogen ions are translocated across the cytoplasmic membrane), and thus conserves the redox energy in a proton gradient. This Pectobacterium atrosepticum (strain SCRI 1043 / ATCC BAA-672) (Erwinia carotovora subsp. atroseptica) protein is NADH-quinone oxidoreductase subunit I.